The chain runs to 141 residues: Protein GAT3 (141 aa).

The GATA-type zinc-finger motif lies at 72-98 (CPQCAVIKTSPQWREGPDGEVTLCNAC).

The sequence is that of Protein GAT3 (GAT3) from Saccharomyces cerevisiae (strain ATCC 204508 / S288c) (Baker's yeast).